A 101-amino-acid chain; its full sequence is NAD(P)H-quinone oxidoreductase subunit 4L, chloroplastic (101 aa).

3 consecutive transmembrane segments (helical) span residues 2–22 (MTEH…YGLI), 32–52 (MCLE…SDLF), and 61–81 (IFSI…PAIV).

The protein belongs to the complex I subunit 4L family. NDH is composed of at least 16 different subunits, 5 of which are encoded in the nucleus.

The protein resides in the plastid. The protein localises to the chloroplast thylakoid membrane. It carries out the reaction a plastoquinone + NADH + (n+1) H(+)(in) = a plastoquinol + NAD(+) + n H(+)(out). The catalysed reaction is a plastoquinone + NADPH + (n+1) H(+)(in) = a plastoquinol + NADP(+) + n H(+)(out). Its function is as follows. NDH shuttles electrons from NAD(P)H:plastoquinone, via FMN and iron-sulfur (Fe-S) centers, to quinones in the photosynthetic chain and possibly in a chloroplast respiratory chain. The immediate electron acceptor for the enzyme in this species is believed to be plastoquinone. Couples the redox reaction to proton translocation, and thus conserves the redox energy in a proton gradient. The sequence is that of NAD(P)H-quinone oxidoreductase subunit 4L, chloroplastic from Liriodendron tulipifera (Tuliptree).